Here is a 90-residue protein sequence, read N- to C-terminus: Small ribosomal subunit protein uS15c (90 aa).

This sequence belongs to the universal ribosomal protein uS15 family. In terms of assembly, part of the 30S ribosomal subunit.

The protein localises to the plastid. The protein resides in the chloroplast. This is Small ribosomal subunit protein uS15c (rps15-A) from Brachypodium distachyon (Purple false brome).